The sequence spans 430 residues: Probable glucose-6-phosphate isomerase (430 aa).

The Proton donor role is filled by E271. Active-site residues include H292, H303, and K403.

This sequence belongs to the GPI family.

The protein localises to the cytoplasm. It carries out the reaction alpha-D-glucose 6-phosphate = beta-D-fructose 6-phosphate. The protein operates within carbohydrate biosynthesis; gluconeogenesis. It participates in carbohydrate degradation; glycolysis; D-glyceraldehyde 3-phosphate and glycerone phosphate from D-glucose: step 2/4. Functionally, catalyzes the reversible isomerization of glucose-6-phosphate to fructose-6-phosphate. This is Probable glucose-6-phosphate isomerase from Haloquadratum walsbyi (strain DSM 16790 / HBSQ001).